We begin with the raw amino-acid sequence, 475 residues long: tRNA-2-methylthio-N(6)-dimethylallyladenosine synthase (475 aa).

Positions 1-10 are enriched in basic and acidic residues; sequence MQETTVKRDG. The disordered stretch occupies residues 1 to 22; sequence MQETTVKRDGASPSDAGTPATT. The MTTase N-terminal domain maps to 27–144; sequence GKLYIRTFGC…LPDLIKRRRA (118 aa). Positions 36, 73, 107, 181, 185, and 188 each coordinate [4Fe-4S] cluster. The 234-residue stretch at 167 to 400 folds into the Radical SAM core domain; the sequence is RVDGATAFVS…QALINQQAAA (234 aa). In terms of domain architecture, TRAM spans 403–466; the sequence is QGMIGTRQRV…TNSLRGRVAG (64 aa).

Belongs to the methylthiotransferase family. MiaB subfamily. As to quaternary structure, monomer. Requires [4Fe-4S] cluster as cofactor.

The protein resides in the cytoplasm. It catalyses the reaction N(6)-dimethylallyladenosine(37) in tRNA + (sulfur carrier)-SH + AH2 + 2 S-adenosyl-L-methionine = 2-methylsulfanyl-N(6)-dimethylallyladenosine(37) in tRNA + (sulfur carrier)-H + 5'-deoxyadenosine + L-methionine + A + S-adenosyl-L-homocysteine + 2 H(+). Its function is as follows. Catalyzes the methylthiolation of N6-(dimethylallyl)adenosine (i(6)A), leading to the formation of 2-methylthio-N6-(dimethylallyl)adenosine (ms(2)i(6)A) at position 37 in tRNAs that read codons beginning with uridine. The sequence is that of tRNA-2-methylthio-N(6)-dimethylallyladenosine synthase from Bordetella bronchiseptica (strain ATCC BAA-588 / NCTC 13252 / RB50) (Alcaligenes bronchisepticus).